The primary structure comprises 342 residues: UDP-3-O-acylglucosamine N-acyltransferase (342 aa).

H242 (proton acceptor) is an active-site residue.

This sequence belongs to the transferase hexapeptide repeat family. LpxD subfamily. In terms of assembly, homotrimer.

It carries out the reaction a UDP-3-O-[(3R)-3-hydroxyacyl]-alpha-D-glucosamine + a (3R)-hydroxyacyl-[ACP] = a UDP-2-N,3-O-bis[(3R)-3-hydroxyacyl]-alpha-D-glucosamine + holo-[ACP] + H(+). It functions in the pathway bacterial outer membrane biogenesis; LPS lipid A biosynthesis. Its function is as follows. Catalyzes the N-acylation of UDP-3-O-acylglucosamine using 3-hydroxyacyl-ACP as the acyl donor. Is involved in the biosynthesis of lipid A, a phosphorylated glycolipid that anchors the lipopolysaccharide to the outer membrane of the cell. In Leptothrix cholodnii (strain ATCC 51168 / LMG 8142 / SP-6) (Leptothrix discophora (strain SP-6)), this protein is UDP-3-O-acylglucosamine N-acyltransferase.